The chain runs to 109 residues: Iron-sulfur cluster assembly protein CyaY (109 aa).

The protein belongs to the frataxin family.

Involved in iron-sulfur (Fe-S) cluster assembly. May act as a regulator of Fe-S biogenesis. The polypeptide is Iron-sulfur cluster assembly protein CyaY (Bordetella avium (strain 197N)).